Consider the following 339-residue polypeptide: Basic membrane protein A (339 aa).

An N-terminal signal peptide occupies residues 1 to 17 (MNKILLLILLESIVFLS). The N-palmitoyl cysteine moiety is linked to residue Cys-18. Cys-18 is lipidated: S-diacylglycerol cysteine.

This sequence belongs to the BMP lipoprotein family. Monomer.

The protein resides in the cell inner membrane. Functionally, immunogenic protein. May be part of an ABC-type nucleoside uptake system involved in the purine salvage pathway. The polypeptide is Basic membrane protein A (bmpA) (Borreliella burgdorferi (strain ATCC 35210 / DSM 4680 / CIP 102532 / B31) (Borrelia burgdorferi)).